A 312-amino-acid polypeptide reads, in one-letter code: Malate dehydrogenase (312 aa).

NAD(+) is bound by residues 12 to 17 and D36; that span reads GAGFTG. Substrate is bound by residues R87 and R93. Residues N100 and 123 to 125 contribute to the NAD(+) site; that span reads LTN. Residue N125 coordinates substrate. Residue S149 is modified to Phosphoserine. R156 lines the substrate pocket. H180 acts as the Proton acceptor in catalysis.

It belongs to the LDH/MDH superfamily. MDH type 3 family.

The catalysed reaction is (S)-malate + NAD(+) = oxaloacetate + NADH + H(+). Functionally, catalyzes the reversible oxidation of malate to oxaloacetate. The polypeptide is Malate dehydrogenase (Geobacillus sp. (strain WCH70)).